A 158-amino-acid chain; its full sequence is NAD(P)H-quinone oxidoreductase subunit J, chloroplastic (158 aa).

It belongs to the complex I 30 kDa subunit family. In terms of assembly, NDH is composed of at least 16 different subunits, 5 of which are encoded in the nucleus.

It is found in the plastid. Its subcellular location is the chloroplast thylakoid membrane. It carries out the reaction a plastoquinone + NADH + (n+1) H(+)(in) = a plastoquinol + NAD(+) + n H(+)(out). It catalyses the reaction a plastoquinone + NADPH + (n+1) H(+)(in) = a plastoquinol + NADP(+) + n H(+)(out). Functionally, NDH shuttles electrons from NAD(P)H:plastoquinone, via FMN and iron-sulfur (Fe-S) centers, to quinones in the photosynthetic chain and possibly in a chloroplast respiratory chain. The immediate electron acceptor for the enzyme in this species is believed to be plastoquinone. Couples the redox reaction to proton translocation, and thus conserves the redox energy in a proton gradient. This Guizotia abyssinica (Niger) protein is NAD(P)H-quinone oxidoreductase subunit J, chloroplastic.